The sequence spans 493 residues: MSFVQIRHISSQINRKTVSIVGSGPSGFYTAYHLLKKSPIPLNVTIWEKLPVPFGLSRYGVAPDHPEVKNCEETFTTCAEEFSSPTNQKHKFSFVGGITIGKEILLKELLDNQDAVILSYGCTGDRKLNIPGELGTKGVFSSREFVNWYNGHPDFAKDKRFTDFDWSKVSKVGIIGNGNVALDITRVLISNQIDEIWENTDISSLALNLLRRAPVKDVKLIARRDFVHSKFTNKELRELWELEKYGIRGRIDPKFFQKEMFDPSKYDRAFNRRVEMCSEYLKPFNERSKKNYKKAPPPSSGYDKFWELDYLKTPLKINRDDFGAINSLSLCNNRLNEDNSLQPLKDVNNIMTYKVDLLITSLGYAGVPMPEFSKLSIGFDKDHIANKQGRVLTSSGEIFPHLYASGWIRKGSQGVIASTMQDAFEVGDRVIQDLVVSGALSLENSIDLSNIKHTTWKDWERINKKELLRGKKEHKTRSKFLTFEELWNGVEGI.

The FAD site is built by serine 26, glutamate 48, leucine 56, and isoleucine 100. Residues 177 to 180, 223 to 224, and glutamate 235 contribute to the NADP(+) site; these read NGNV and RR. FAD-binding positions include tryptophan 407 and 414–416; that span reads GVI. An NADP(+)-binding site is contributed by glycine 414.

It belongs to the ferredoxin--NADP reductase type 1 family. FAD serves as cofactor.

It is found in the mitochondrion inner membrane. The catalysed reaction is 2 reduced [adrenodoxin] + NADP(+) + H(+) = 2 oxidized [adrenodoxin] + NADPH. In terms of biological role, adrenodoxin reductase transfers electrons from NADPH to adrenodoxin, which is involved in heme A biosynthesis and in iron-sulfur cluster assembly. Involved in the electron transfer to heme A synthase COX15, a heme protein that catalyzes the conversion of heme O to heme A. Required for the de novo synthesis of Fe-S clusters on iron sulfur cluster assembly protein ISU1. Involved in electron delivery for Fe-S cluster synthesis. Essential for coenzyme Q biosynthesis. May be involved in the electron transfer required for the hydroxylation reaction performed by COQ6. May play a role in cellular and mitochondrial iron homeostasis. In Saccharomyces cerevisiae (strain ATCC 204508 / S288c) (Baker's yeast), this protein is Probable NADPH:adrenodoxin oxidoreductase, mitochondrial.